The following is a 594-amino-acid chain: Glutamate decarboxylase 1 (594 aa).

A compositionally biased stretch (low complexity) spans 1 to 13 (MASSTPSSSATSS). The tract at residues 1–22 (MASSTPSSSATSSNAGADPNTA) is disordered. Ser-78 carries the phosphoserine modification. 190 to 192 (QLS) lines the 4-aminobutanoate pocket. Position 405 is an N6-(pyridoxal phosphate)lysine (Lys-405). Residue Arg-567 coordinates 4-aminobutanoate.

It belongs to the group II decarboxylase family. Homodimer. It depends on pyridoxal 5'-phosphate as a cofactor.

The catalysed reaction is L-glutamate + H(+) = 4-aminobutanoate + CO2. In terms of biological role, catalyzes the synthesis of the inhibitory neurotransmitter gamma-aminobutyric acid (GABA) with pyridoxal 5'-phosphate as cofactor. The chain is Glutamate decarboxylase 1 (GAD1) from Canis lupus familiaris (Dog).